Here is a 477-residue protein sequence, read N- to C-terminus: Glycogen synthase (477 aa).

ADP-alpha-D-glucose is bound at residue Lys15.

This sequence belongs to the glycosyltransferase 1 family. Bacterial/plant glycogen synthase subfamily.

The enzyme catalyses [(1-&gt;4)-alpha-D-glucosyl](n) + ADP-alpha-D-glucose = [(1-&gt;4)-alpha-D-glucosyl](n+1) + ADP + H(+). It functions in the pathway glycan biosynthesis; glycogen biosynthesis. In terms of biological role, synthesizes alpha-1,4-glucan chains using ADP-glucose. The protein is Glycogen synthase of Edwardsiella ictaluri (strain 93-146).